A 484-amino-acid chain; its full sequence is Arginyl-tRNA--protein transferase 1 (484 aa).

It belongs to the R-transferase family.

It catalyses the reaction an N-terminal L-alpha-aminoacyl-[protein] + L-arginyl-tRNA(Arg) = an N-terminal L-arginyl-L-aminoacyl-[protein] + tRNA(Arg) + H(+). In terms of biological role, involved in the post-translational conjugation of arginine to the N-terminal aspartate or glutamate of a protein. This arginylation is required for degradation of the protein via the ubiquitin pathway. Does not arginylate cysteine residues. This is Arginyl-tRNA--protein transferase 1 (Ate1) from Drosophila melanogaster (Fruit fly).